The following is a 617-amino-acid chain: V-type proton ATPase catalytic subunit A (617 aa).

Residue 257 to 264 (GAFGCGKT) coordinates ATP.

Belongs to the ATPase alpha/beta chains family. V-ATPase is a heteromultimeric enzyme composed of a peripheral catalytic V1 complex (components A to H) attached to an integral membrane V0 proton pore complex (components: a, c, c', c'', d, e, f and VOA1).

It is found in the vacuole membrane. The catalysed reaction is ATP + H2O + 4 H(+)(in) = ADP + phosphate + 5 H(+)(out). In terms of biological role, catalytic subunit of the V1 complex of vacuolar(H+)-ATPase (V-ATPase), a multisubunit enzyme composed of a peripheral complex (V1) that hydrolyzes ATP and a membrane integral complex (V0) that translocates protons. V-ATPase is responsible for acidifying and maintaining the pH of intracellular compartments. This chain is V-type proton ATPase catalytic subunit A (VMA1), found in Eremothecium gossypii (strain ATCC 10895 / CBS 109.51 / FGSC 9923 / NRRL Y-1056) (Yeast).